The primary structure comprises 295 residues: Pyridoxal 5'-phosphate synthase subunit PdxS (295 aa).

Aspartate 25 contacts D-ribose 5-phosphate. Lysine 82 (schiff-base intermediate with D-ribose 5-phosphate) is an active-site residue. Glycine 154 contacts D-ribose 5-phosphate. Arginine 166 is a binding site for D-glyceraldehyde 3-phosphate. D-ribose 5-phosphate contacts are provided by residues glycine 215 and 236 to 237 (GS).

It belongs to the PdxS/SNZ family. As to quaternary structure, in the presence of PdxT, forms a dodecamer of heterodimers.

It catalyses the reaction aldehydo-D-ribose 5-phosphate + D-glyceraldehyde 3-phosphate + L-glutamine = pyridoxal 5'-phosphate + L-glutamate + phosphate + 3 H2O + H(+). It participates in cofactor biosynthesis; pyridoxal 5'-phosphate biosynthesis. In terms of biological role, catalyzes the formation of pyridoxal 5'-phosphate from ribose 5-phosphate (RBP), glyceraldehyde 3-phosphate (G3P) and ammonia. The ammonia is provided by the PdxT subunit. Can also use ribulose 5-phosphate and dihydroxyacetone phosphate as substrates, resulting from enzyme-catalyzed isomerization of RBP and G3P, respectively. The polypeptide is Pyridoxal 5'-phosphate synthase subunit PdxS (Heliobacterium modesticaldum (strain ATCC 51547 / Ice1)).